Reading from the N-terminus, the 94-residue chain is Small ribosomal subunit protein uS19 (94 aa).

The protein belongs to the universal ribosomal protein uS19 family.

Functionally, protein S19 forms a complex with S13 that binds strongly to the 16S ribosomal RNA. The protein is Small ribosomal subunit protein uS19 of Endomicrobium trichonymphae.